A 190-amino-acid polypeptide reads, in one-letter code: NADH-quinone oxidoreductase subunit B (190 aa).

Residues C39, C40, C104, and C135 each coordinate [4Fe-4S] cluster.

It belongs to the complex I 20 kDa subunit family. In terms of assembly, NDH-1 is composed of 14 different subunits. Subunits NuoB, C, D, E, F, and G constitute the peripheral sector of the complex. The cofactor is [4Fe-4S] cluster.

The protein resides in the cell inner membrane. The enzyme catalyses a quinone + NADH + 5 H(+)(in) = a quinol + NAD(+) + 4 H(+)(out). In terms of biological role, NDH-1 shuttles electrons from NADH, via FMN and iron-sulfur (Fe-S) centers, to quinones in the respiratory chain. The immediate electron acceptor for the enzyme in this species is believed to be a menaquinone. Couples the redox reaction to proton translocation (for every two electrons transferred, four hydrogen ions are translocated across the cytoplasmic membrane), and thus conserves the redox energy in a proton gradient. This chain is NADH-quinone oxidoreductase subunit B, found in Prosthecochloris aestuarii (strain DSM 271 / SK 413).